The primary structure comprises 380 residues: Lipid-A-disaccharide synthase (380 aa).

It belongs to the LpxB family.

The enzyme catalyses a lipid X + a UDP-2-N,3-O-bis[(3R)-3-hydroxyacyl]-alpha-D-glucosamine = a lipid A disaccharide + UDP + H(+). It participates in bacterial outer membrane biogenesis; LPS lipid A biosynthesis. In terms of biological role, condensation of UDP-2,3-diacylglucosamine and 2,3-diacylglucosamine-1-phosphate to form lipid A disaccharide, a precursor of lipid A, a phosphorylated glycolipid that anchors the lipopolysaccharide to the outer membrane of the cell. The sequence is that of Lipid-A-disaccharide synthase from Pseudomonas syringae pv. tomato (strain ATCC BAA-871 / DC3000).